The chain runs to 210 residues: Fibrillarin-like rRNA/tRNA 2'-O-methyltransferase (210 aa).

S-adenosyl-L-methionine-binding positions include threonine 72–threonine 73, glutamate 88–phenylalanine 89, aspartate 113–alanine 114, and aspartate 134–threonine 137.

This sequence belongs to the methyltransferase superfamily. Fibrillarin family. In terms of assembly, interacts with nop5. Component of box C/D small ribonucleoprotein (sRNP) particles that contain rpl7ae, FlpA and nop5, plus a guide RNA.

Involved in pre-rRNA and tRNA processing. Utilizes the methyl donor S-adenosyl-L-methionine to catalyze the site-specific 2'-hydroxyl methylation of ribose moieties in rRNA and tRNA. Site specificity is provided by a guide RNA that base pairs with the substrate. Methylation occurs at a characteristic distance from the sequence involved in base pairing with the guide RNA. The polypeptide is Fibrillarin-like rRNA/tRNA 2'-O-methyltransferase (Halobacterium salinarum (strain ATCC 29341 / DSM 671 / R1)).